The sequence spans 80 residues: RNA-binding protein KhpA (80 aa).

Residues 33–80 (LEILQLRVASEDVGKVIGKHGRIARALRTLLSASAHASQTRYALEIID) enclose the KH domain.

This sequence belongs to the KhpA RNA-binding protein family. Forms a complex with KhpB.

It localises to the cytoplasm. In terms of biological role, a probable RNA chaperone. Forms a complex with KhpB which binds to cellular RNA and controls its expression. Plays a role in peptidoglycan (PG) homeostasis and cell length regulation. In Treponema pallidum (strain Nichols), this protein is RNA-binding protein KhpA.